The following is a 502-amino-acid chain: Maturase K (502 aa).

Belongs to the intron maturase 2 family. MatK subfamily.

It is found in the plastid. It localises to the chloroplast. Its function is as follows. Usually encoded in the trnK tRNA gene intron. Probably assists in splicing its own and other chloroplast group II introns. The chain is Maturase K from Cephalotaxus fortunei (Chinese plum-yew).